Reading from the N-terminus, the 499-residue chain is Glycerol kinase (499 aa).

T13 serves as a coordination point for ADP. T13, T14, and S15 together coordinate ATP. Position 13 (T13) interacts with sn-glycerol 3-phosphate. R17 serves as a coordination point for ADP. The sn-glycerol 3-phosphate site is built by R83, E84, Y135, and D245. 5 residues coordinate glycerol: R83, E84, Y135, D245, and Q246. The ADP site is built by T267 and G310. The ATP site is built by T267, G310, Q314, and A411. A411 and N415 together coordinate ADP.

It belongs to the FGGY kinase family.

It catalyses the reaction glycerol + ATP = sn-glycerol 3-phosphate + ADP + H(+). It functions in the pathway polyol metabolism; glycerol degradation via glycerol kinase pathway; sn-glycerol 3-phosphate from glycerol: step 1/1. Inhibited by fructose 1,6-bisphosphate (FBP). Functionally, key enzyme in the regulation of glycerol uptake and metabolism. Catalyzes the phosphorylation of glycerol to yield sn-glycerol 3-phosphate. In Xylella fastidiosa (strain M23), this protein is Glycerol kinase.